A 790-amino-acid polypeptide reads, in one-letter code: Phenylalanine--tRNA ligase beta subunit (790 aa).

The tRNA-binding domain maps to 39 to 154 (PDSLNTVVTG…ENTPLGESAC (116 aa)). The region spanning 404–483 (SDPLSLNIRP…FVQKTQKILP (80 aa)) is the B5 domain. Residues Asp457, Asp463, Glu466, and Glu467 each coordinate Mg(2+). The FDX-ACB domain maps to 694 to 790 (PIYPSSSRDI…NLANIGKGNS (97 aa)).

This sequence belongs to the phenylalanyl-tRNA synthetase beta subunit family. Type 1 subfamily. As to quaternary structure, tetramer of two alpha and two beta subunits. Mg(2+) is required as a cofactor.

Its subcellular location is the cytoplasm. It catalyses the reaction tRNA(Phe) + L-phenylalanine + ATP = L-phenylalanyl-tRNA(Phe) + AMP + diphosphate + H(+). The polypeptide is Phenylalanine--tRNA ligase beta subunit (pheT) (Chlamydia muridarum (strain MoPn / Nigg)).